Consider the following 222-residue polypeptide: Probable mitochondrial import inner membrane translocase subunit Tim17 3 (222 aa).

The next 3 membrane-spanning stretches (helical) occupy residues C16 to F36, S60 to V80, and A115 to I135.

It belongs to the Tim17/Tim22/Tim23 family. As to quaternary structure, component of the TIM23 complex at least composed of Tim23, Tim17 (Tim17a1, Tim17a2 or Tim17b1) and a Tim50. The complex interacts with the Tim44 component of the PAM complex.

It is found in the mitochondrion inner membrane. Its function is as follows. Essential component of the TIM23 complex, a complex that mediates the translocation of transit peptide-containing proteins across the mitochondrial inner membrane. The polypeptide is Probable mitochondrial import inner membrane translocase subunit Tim17 3 (Tim17a1) (Drosophila melanogaster (Fruit fly)).